Reading from the N-terminus, the 99-residue chain is SAGA-associated factor 11 (99 aa).

Residues 71 to 92 (FYCENCGREVSGNRFAAHLQRC) form an SGF11-type zinc finger.

This sequence belongs to the SGF11 family. As to quaternary structure, component of the 1.8 MDa SAGA transcription coactivator-HAT complex. SAGA is built of 5 distinct domains with specialized functions. Within the SAGA complex, SUS1, SGF11, SGF73 and UBP8 form an additional subcomplex of SAGA called the DUB module (deubiquitination module). Interacts directly with SGF73, SUS1 and UBP8.

The protein resides in the nucleus. Functions as a component of the transcription regulatory histone acetylation (HAT) complex SAGA. At the promoters, SAGA is required for recruitment of the basal transcription machinery. It influences RNA polymerase II transcriptional activity through different activities such as TBP interaction and promoter selectivity, interaction with transcription activators, and chromatin modification through histone acetylation and deubiquitination. SAGA acetylates nucleosomal histone H3 to some extent (to form H3K9ac, H3K14ac, H3K18ac and H3K23ac). SAGA interacts with DNA via upstream activating sequences (UASs). Involved in transcriptional regulation of a subset of SAGA-regulated genes. Within the SAGA complex, participates in a subcomplex, that specifically deubiquitinates histones H2B. This Candida glabrata (strain ATCC 2001 / BCRC 20586 / JCM 3761 / NBRC 0622 / NRRL Y-65 / CBS 138) (Yeast) protein is SAGA-associated factor 11.